We begin with the raw amino-acid sequence, 322 residues long: Solute carrier family 35 member B1 (322 aa).

8 helical membrane passes run leucine 12–glutamine 32, phenylalanine 51–isoleucine 71, tryptophan 85–leucine 105, tyrosine 136–tyrosine 156, threonine 168–valine 188, leucine 210–leucine 230, isoleucine 243–tyrosine 263, and valine 285–leucine 305. Residues lysine 318 to histidine 322 carry the Di-lysine motif motif.

It belongs to the nucleotide-sugar transporter family. SLC35B subfamily.

The protein localises to the endoplasmic reticulum membrane. It carries out the reaction ADP(in) + ATP(out) = ADP(out) + ATP(in). The catalysed reaction is UDP(out) + ATP(in) = UDP(in) + ATP(out). The enzyme catalyses UTP(out) + ATP(in) = UTP(in) + ATP(out). It catalyses the reaction dATP(out) + ATP(in) = dATP(in) + ATP(out). Its function is as follows. ATP:ADP antiporter that catalyzes the exchange of ATP and ADP across the endoplasmic reticulum (ER) membrane. Imports ATP from the cytosol to the ER lumen and exports ADP in the opposite direction. Regulates ER energy metabolism and protein biogenesis. Appears to be part of a calcium-dependent ER to cytosol low energy response axis, where calcium efflux from ER to the cytosol triggers ATP import into the ER lumen to maintain sufficient ATP supply. Provides ATP to ER chaperone HSPA5 that drives protein folding and trafficking in the ER. Can transport dATP, UTP or UDP in exchange for ATP, but the physiological relevance of this process remains to be established. This chain is Solute carrier family 35 member B1 (Slc35b1), found in Rattus norvegicus (Rat).